The primary structure comprises 437 residues: GTPase Obg (437 aa).

The region spanning 2–160 (SMFLDTAKIS…RQLELELKIL (159 aa)) is the Obg domain. The region spanning 161–338 (ADVGLVGFPS…LLEATAELLA (178 aa)) is the OBG-type G domain. Residues 167-174 (GFPSVGKS), 192-196 (FTTIV), 214-217 (DLPG), 284-287 (NKMD), and 319-321 (SSL) contribute to the GTP site. Serine 174 and threonine 194 together coordinate Mg(2+). The OCT domain maps to 359–437 (GFAETEKDFE…IGKFEFEFVD (79 aa)).

This sequence belongs to the TRAFAC class OBG-HflX-like GTPase superfamily. OBG GTPase family. In terms of assembly, monomer. It depends on Mg(2+) as a cofactor.

It is found in the cytoplasm. Its function is as follows. An essential GTPase which binds GTP, GDP and possibly (p)ppGpp with moderate affinity, with high nucleotide exchange rates and a fairly low GTP hydrolysis rate. Plays a role in control of the cell cycle, stress response, ribosome biogenesis and in those bacteria that undergo differentiation, in morphogenesis control. This chain is GTPase Obg, found in Streptococcus pyogenes serotype M1.